The primary structure comprises 246 residues: DNA polymerase sliding clamp (246 aa).

It belongs to the PCNA family. In terms of assembly, homotrimer. The subunits circularize to form a toroid; DNA passes through its center. Replication factor C (RFC) is required to load the toroid on the DNA.

Functionally, sliding clamp subunit that acts as a moving platform for DNA processing. Responsible for tethering the catalytic subunit of DNA polymerase and other proteins to DNA during high-speed replication. The chain is DNA polymerase sliding clamp from Methanocella arvoryzae (strain DSM 22066 / NBRC 105507 / MRE50).